Here is a 224-residue protein sequence, read N- to C-terminus: Large ribosomal subunit protein bL25 (224 aa).

The tract at residues 196–224 (VEEVDTDAEEVDAADVPATEQGSEEDKGE) is disordered. Residues 197-208 (EEVDTDAEEVDA) are compositionally biased toward acidic residues.

It belongs to the bacterial ribosomal protein bL25 family. CTC subfamily. In terms of assembly, part of the 50S ribosomal subunit; part of the 5S rRNA/L5/L18/L25 subcomplex. Contacts the 5S rRNA. Binds to the 5S rRNA independently of L5 and L18.

Its function is as follows. This is one of the proteins that binds to the 5S RNA in the ribosome where it forms part of the central protuberance. This Psychrobacter sp. (strain PRwf-1) protein is Large ribosomal subunit protein bL25.